Consider the following 250-residue polypeptide: Triosephosphate isomerase (250 aa).

Substrate is bound at residue 9 to 11 (NWK). Catalysis depends on His-95, which acts as the Electrophile. The active-site Proton acceptor is Glu-167. Substrate-binding positions include Gly-173, Ser-212, and 233-234 (GG).

Belongs to the triosephosphate isomerase family. In terms of assembly, homodimer.

The protein localises to the cytoplasm. It carries out the reaction D-glyceraldehyde 3-phosphate = dihydroxyacetone phosphate. It functions in the pathway carbohydrate biosynthesis; gluconeogenesis. Its pathway is carbohydrate degradation; glycolysis; D-glyceraldehyde 3-phosphate from glycerone phosphate: step 1/1. In terms of biological role, involved in the gluconeogenesis. Catalyzes stereospecifically the conversion of dihydroxyacetone phosphate (DHAP) to D-glyceraldehyde-3-phosphate (G3P). The chain is Triosephosphate isomerase from Endomicrobium trichonymphae.